The primary structure comprises 117 residues: Replication initiation control protein YabA (117 aa).

A disordered region spans residues 45 to 81; that stretch reads NQHLRERLDQSDRDKSSETENDSAQKPGHSDIGEGHD. Basic and acidic residues-rich tracts occupy residues 46-62 and 72-81; these read QHLR…KSSE and GHSDIGEGHD. Residues H92, C94, C107, and C110 each coordinate Zn(2+).

Belongs to the YabA family. As to quaternary structure, homotetramer. Interacts with both DnaA and DnaN, acting as a bridge between these two proteins. Zn(2+) serves as cofactor.

The protein resides in the cytoplasm. It is found in the nucleoid. In terms of biological role, involved in control of chromosome replication initiation. Inhibits the cooperative binding of DnaA to the oriC region, thus negatively regulating initiation of chromosome replication. Inhibits the ability of DnaA-ATP to form a helix on DNA; does not disassemble preformed DnaA-DNA helices. Decreases the residence time of DnaA on the chromosome at its binding sites (oriC, replication forks and promoter-binding sites). Tethers DnaA to the replication machinery via the DNA polymerase beta sliding clamp subunit (dnaN). Associates with oriC and other DnaA targets on the chromosome in a DnaA-dependent manner. The protein is Replication initiation control protein YabA of Bacillus pumilus (strain SAFR-032).